A 316-amino-acid polypeptide reads, in one-letter code: Tyrosine recombinase XerD (316 aa).

The region spanning alanine 4–valine 97 is the Core-binding (CB) domain. Residues arginine 118–alanine 309 enclose the Tyr recombinase domain. Residues arginine 162, lysine 186, histidine 261, arginine 264, and histidine 287 contribute to the active site. Tyrosine 296 serves as the catalytic O-(3'-phospho-DNA)-tyrosine intermediate.

This sequence belongs to the 'phage' integrase family. XerD subfamily. As to quaternary structure, forms a cyclic heterotetrameric complex composed of two molecules of XerC and two molecules of XerD.

It localises to the cytoplasm. Its function is as follows. Site-specific tyrosine recombinase, which acts by catalyzing the cutting and rejoining of the recombining DNA molecules. The XerC-XerD complex is essential to convert dimers of the bacterial chromosome into monomers to permit their segregation at cell division. It also contributes to the segregational stability of plasmids. This Mycobacterium leprae (strain TN) protein is Tyrosine recombinase XerD.